The primary structure comprises 223 residues: MFAVIKTGGKQYRVAANDLLKIEKVEANVGDIVEIGHVLAHGEGENVTFGAPFVDGALVTAEVVEQGKNRTVIAFKKRRRQNSRRKIGHRQLLTTVRISEILLGGAKPAKKAAVKAEAKAEVAAEAAPKEAKAKKEAAPKADVTAETAAAPLFKAPKGEPDDLTVIKGIGPVAAKDLNEQGIITFAQLAKLTDKDVAKIDEHMPFSADQIKDWREQAKELAKK.

This sequence belongs to the bacterial ribosomal protein bL21 family. In terms of assembly, part of the 50S ribosomal subunit. Contacts protein L20.

In terms of biological role, this protein binds to 23S rRNA in the presence of protein L20. The sequence is that of Large ribosomal subunit protein bL21 from Mesorhizobium japonicum (strain LMG 29417 / CECT 9101 / MAFF 303099) (Mesorhizobium loti (strain MAFF 303099)).